The following is a 354-amino-acid chain: Transcription factor BHLH3 (354 aa).

Residues 124–143 are disordered; sequence VAEEETSGDKALLHGGGGSS. Positions 178–191 are basic motif; sequence GTPSKNLMAERRRR. Residues 178 to 227 form the bHLH domain; the sequence is GTPSKNLMAERRRRKRLNDRLSMLRSIVPKISKMDRTSILGDTIDYVKEL. The helix-loop-helix motif stretch occupies residues 192-227; it reads KRLNDRLSMLRSIVPKISKMDRTSILGDTIDYVKEL.

The protein belongs to the bHLH protein family. Interacts with LAX1. Post-translationally, phosphorylated by MAPK3 and MAPK6.

Its subcellular location is the nucleus. The protein resides in the cytoplasm. Its function is as follows. Transcription factor involved in defense responses that functions downstream of RAC1 and upstream of PAL1 and WRKY19 genes. This chain is Transcription factor BHLH3, found in Oryza sativa subsp. japonica (Rice).